The following is a 131-amino-acid chain: Small ribosomal subunit protein uS8 (131 aa).

Belongs to the universal ribosomal protein uS8 family. In terms of assembly, part of the 30S ribosomal subunit. Contacts proteins S5 and S12.

Its function is as follows. One of the primary rRNA binding proteins, it binds directly to 16S rRNA central domain where it helps coordinate assembly of the platform of the 30S subunit. The sequence is that of Small ribosomal subunit protein uS8 from Chlorobium luteolum (strain DSM 273 / BCRC 81028 / 2530) (Pelodictyon luteolum).